The following is a 407-amino-acid chain: MFSKIIQSYAKGNLIVQICIGIALGILIGISSKEISEIANLLGILFTSALKAIAPMLVFILILTSICTKDFSQSGAKIKNIIILYIVGTFFASACAVLANFFFPVKLVLDGVQTATNSSPTHMSDIFKDLLFKIVDNPINALSSGNYLGILTWAIAGGIALKHCSNEAKQVFIDINEGVLKIVKFVVKLAPFGIFGLVANSVAQTGAQGLLSYVKLLILLVATMLFVTFVINALIVFFYTRKNPFPLIFICLRHSAFFAFFTRSSAANIPVNMALCAKLGIDKEFYGISIPLGATINMAGAAVTIAILSLTAANTVGIEISLLQAFLLSIIATFAACGASGVAGGSLLLIPLACSLFNIDYDIAMKVVAIGFIIGVIQDSVETALNSSTDVLFTAICSKNELNYNIK.

9 helical membrane-spanning segments follow: residues 12–32, 42–62, 81–101, 141–161, 179–199, 218–238, 245–267, 288–308, and 330–350; these read GNLI…GISS, LGIL…FILI, IIIL…LANF, ALSS…GIAL, VLKI…GLVA, ILLV…IVFF, FPLI…SSAA, ISIP…IAIL, and IIAT…LLLI.

The protein belongs to the dicarboxylate/amino acid:cation symporter (DAACS) (TC 2.A.23) family.

It localises to the cell inner membrane. It carries out the reaction L-serine(in) + Na(+)(in) = L-serine(out) + Na(+)(out). The catalysed reaction is L-threonine(in) + Na(+)(in) = L-threonine(out) + Na(+)(out). Involved in the import of serine and threonine into the cell, with the concomitant import of sodium (symport system). This Campylobacter jejuni subsp. jejuni serotype O:2 (strain ATCC 700819 / NCTC 11168) protein is Serine/threonine transporter SstT.